The primary structure comprises 197 residues: Translation machinery-associated protein 22 (197 aa).

One can recognise an SUI1 domain in the interval 103–174 (IRIKRVERNK…DVREFLIKNY (72 aa)).

The protein belongs to the DENR family. In terms of assembly, interacts with the 40S ribosomal subunit.

Its subcellular location is the cytoplasm. This chain is Translation machinery-associated protein 22 (tma22), found in Botryotinia fuckeliana (strain B05.10) (Noble rot fungus).